The chain runs to 793 residues: Phenylalanine--tRNA ligase beta subunit (793 aa).

The tRNA-binding domain occupies 39–148; sequence AKPFTGVVVG…EDAPVGLNIR (110 aa). In terms of domain architecture, B5 spans 400 to 476; it reads PKREAIELNQ…RIHGYDNIQI (77 aa). Residues aspartate 454, aspartate 460, glutamate 463, and glutamate 464 each contribute to the Mg(2+) site. The FDX-ACB domain maps to 698–791; the sequence is SRFPSVRRDI…LENTYQATLR (94 aa).

This sequence belongs to the phenylalanyl-tRNA synthetase beta subunit family. Type 1 subfamily. In terms of assembly, tetramer of two alpha and two beta subunits. It depends on Mg(2+) as a cofactor.

It localises to the cytoplasm. It catalyses the reaction tRNA(Phe) + L-phenylalanine + ATP = L-phenylalanyl-tRNA(Phe) + AMP + diphosphate + H(+). The protein is Phenylalanine--tRNA ligase beta subunit of Acinetobacter baylyi (strain ATCC 33305 / BD413 / ADP1).